Consider the following 40-residue polypeptide: Alpha-conotoxin-like Lp1.6b (40 aa).

Residues 1–23 (VVLGPASDGRNAAANNKASDLIR) constitute a propeptide that is removed on maturation. Glutamine 24 is subject to Pyrrolidone carboxylic acid. 2 disulfide bridges follow: cysteine 26–cysteine 32 and cysteine 27–cysteine 39.

Belongs to the conotoxin A superfamily. As to expression, expressed by the venom duct.

It localises to the secreted. Functionally, alpha-conotoxins act on postsynaptic membranes, they bind to the nicotinic acetylcholine receptors (nAChR) and thus inhibit them. This chain is Alpha-conotoxin-like Lp1.6b, found in Conus leopardus (Leopard cone).